The chain runs to 379 residues: Probable G-protein coupled receptor 27 (379 aa).

The Extracellular portion of the chain corresponds to 1–26 (MANASEPGGGGSGGGAEAAALGLRLA). Residue Asn-3 is glycosylated (N-linked (GlcNAc...) asparagine). A helical membrane pass occupies residues 27–47 (TLSLLLCVSLAGNVLFALLIV). At 48–58 (RERSLHRAPYY) the chain is on the cytoplasmic side. Residues 59 to 79 (LLLDLCLADGLRALACLPAVM) form a helical membrane-spanning segment. Residues 80 to 100 (LAARRAAAAAGTPPGALGCKL) are Extracellular-facing. The cysteines at positions 98 and 175 are disulfide-linked. A helical membrane pass occupies residues 101-121 (LAFLAALFCFHAAFLLLGVGV). The Cytoplasmic segment spans residues 122–142 (TRYLAIAHHRFYAERLAGWPC). A helical transmembrane segment spans residues 143-163 (AAMLVCAAWALALAAAFPPVL). Topologically, residues 164-185 (DGGGADDEDAPCALEQRPDGAP) are extracellular. The helical transmembrane segment at 186–206 (GALGFLLLLAAVVGATHLVYL) threads the bilayer. The Cytoplasmic segment spans residues 207 to 289 (RLLFFIHDRR…FKTEKRLCKM (83 aa)). A helical transmembrane segment spans residues 290-310 (FYAITLLFLLLWGPYVVASYL). Over 311–324 (RVLVRPGAVPQAYL) the chain is Extracellular. A helical transmembrane segment spans residues 325–345 (TASVWLTFAQAGINPVVCFLF). At 346 to 379 (NRELRDCFRAQFPCCQSPQATQATLPCDLKGIGL) the chain is on the cytoplasmic side.

The protein belongs to the G-protein coupled receptor 1 family.

It localises to the cell membrane. Functionally, orphan receptor. Possible candidate for amine-like G-protein coupled receptor. The polypeptide is Probable G-protein coupled receptor 27 (Gpr27) (Mus musculus (Mouse)).